A 474-amino-acid polypeptide reads, in one-letter code: Glutamate--tRNA ligase (474 aa).

Residues 9–19 (PSPTGYLHVGG) carry the 'HIGH' region motif. A 'KMSKS' region motif is present at residues 240 to 244 (KLSKR). Residue Lys243 participates in ATP binding.

It belongs to the class-I aminoacyl-tRNA synthetase family. Glutamate--tRNA ligase type 1 subfamily. Monomer.

Its subcellular location is the cytoplasm. The catalysed reaction is tRNA(Glu) + L-glutamate + ATP = L-glutamyl-tRNA(Glu) + AMP + diphosphate. Functionally, catalyzes the attachment of glutamate to tRNA(Glu) in a two-step reaction: glutamate is first activated by ATP to form Glu-AMP and then transferred to the acceptor end of tRNA(Glu). The sequence is that of Glutamate--tRNA ligase from Vibrio vulnificus (strain CMCP6).